A 269-amino-acid polypeptide reads, in one-letter code: Energy-coupling factor transporter ATP-binding protein EcfA1 (269 aa).

Residues 8 to 242 (IEFKDVSFQY…EEALISVGLD (235 aa)) form the ABC transporter domain. 42-49 (GHNGSGKS) contributes to the ATP binding site.

This sequence belongs to the ABC transporter superfamily. Energy-coupling factor EcfA family. Forms a stable energy-coupling factor (ECF) transporter complex composed of 2 membrane-embedded substrate-binding proteins (S component), 2 ATP-binding proteins (A component) and 2 transmembrane proteins (T component).

The protein localises to the cell membrane. In terms of biological role, ATP-binding (A) component of a common energy-coupling factor (ECF) ABC-transporter complex. Unlike classic ABC transporters this ECF transporter provides the energy necessary to transport a number of different substrates. The protein is Energy-coupling factor transporter ATP-binding protein EcfA1 of Staphylococcus epidermidis (strain ATCC 35984 / DSM 28319 / BCRC 17069 / CCUG 31568 / BM 3577 / RP62A).